The sequence spans 86 residues: Large ribosomal subunit protein uL23 (86 aa).

This sequence belongs to the universal ribosomal protein uL23 family. In terms of assembly, part of the 50S ribosomal subunit. Contacts protein L29.

Its function is as follows. Binds to 23S rRNA. One of the proteins that surrounds the polypeptide exit tunnel on the outside of the ribosome. This Pyrococcus abyssi (strain GE5 / Orsay) protein is Large ribosomal subunit protein uL23.